Consider the following 644-residue polypeptide: Putative aldehyde dehydrogenase-like protein YHR039C (644 aa).

Asn15 is a glycosylation site (N-linked (GlcNAc...) asparagine). The active-site Proton acceptor is Glu354. Cys389 functions as the Nucleophile in the catalytic mechanism. Asn565 and Asn627 each carry an N-linked (GlcNAc...) asparagine glycan.

The protein belongs to the aldehyde dehydrogenase family. N-glycosylated.

It is found in the endoplasmic reticulum. The protein is Putative aldehyde dehydrogenase-like protein YHR039C (MSC7) of Saccharomyces cerevisiae (strain ATCC 204508 / S288c) (Baker's yeast).